The sequence spans 947 residues: Bifunctional glutamine synthetase adenylyltransferase/adenylyl-removing enzyme (947 aa).

The adenylyl removase stretch occupies residues 1–440 (MTPLSSPLSQ…VFNELIGDDE (440 aa)). The tract at residues 450–947 (SEPWREVWQD…ASWRKWLVAV (498 aa)) is adenylyl transferase.

The protein belongs to the GlnE family. Mg(2+) is required as a cofactor.

It carries out the reaction [glutamine synthetase]-O(4)-(5'-adenylyl)-L-tyrosine + phosphate = [glutamine synthetase]-L-tyrosine + ADP. The enzyme catalyses [glutamine synthetase]-L-tyrosine + ATP = [glutamine synthetase]-O(4)-(5'-adenylyl)-L-tyrosine + diphosphate. Functionally, involved in the regulation of glutamine synthetase GlnA, a key enzyme in the process to assimilate ammonia. When cellular nitrogen levels are high, the C-terminal adenylyl transferase (AT) inactivates GlnA by covalent transfer of an adenylyl group from ATP to specific tyrosine residue of GlnA, thus reducing its activity. Conversely, when nitrogen levels are low, the N-terminal adenylyl removase (AR) activates GlnA by removing the adenylyl group by phosphorolysis, increasing its activity. The regulatory region of GlnE binds the signal transduction protein PII (GlnB) which indicates the nitrogen status of the cell. The polypeptide is Bifunctional glutamine synthetase adenylyltransferase/adenylyl-removing enzyme (Salmonella schwarzengrund (strain CVM19633)).